Reading from the N-terminus, the 80-residue chain is Protein KorB (80 aa).

2 DNA-binding regions (H-T-H motif) span residues 13–32 and 56–75; these read AEAA…AELD and NEVT…AEAE.

Its function is as follows. Repressor for the transcription of certain pIJ101 promoters, including those the from kilA and kilB loci. The chain is Protein KorB (korB) from Streptomyces lividans.